Here is a 463-residue protein sequence, read N- to C-terminus: Bifunctional protein HldE (463 aa).

The ribokinase stretch occupies residues 1-315; sequence MKKILVIGDL…LILNQTHPKI (315 aa). 191-194 provides a ligand contact to ATP; sequence NRAE. D260 is an active-site residue. Positions 334–463 are cytidylyltransferase; sequence FTNGCFDILH…IEKIKRTHND (130 aa).

It in the N-terminal section; belongs to the carbohydrate kinase PfkB family. This sequence in the C-terminal section; belongs to the cytidylyltransferase family. In terms of assembly, homodimer.

The enzyme catalyses D-glycero-beta-D-manno-heptose 7-phosphate + ATP = D-glycero-beta-D-manno-heptose 1,7-bisphosphate + ADP + H(+). It carries out the reaction D-glycero-beta-D-manno-heptose 1-phosphate + ATP + H(+) = ADP-D-glycero-beta-D-manno-heptose + diphosphate. It functions in the pathway nucleotide-sugar biosynthesis; ADP-L-glycero-beta-D-manno-heptose biosynthesis; ADP-L-glycero-beta-D-manno-heptose from D-glycero-beta-D-manno-heptose 7-phosphate: step 1/4. It participates in nucleotide-sugar biosynthesis; ADP-L-glycero-beta-D-manno-heptose biosynthesis; ADP-L-glycero-beta-D-manno-heptose from D-glycero-beta-D-manno-heptose 7-phosphate: step 3/4. Its pathway is bacterial outer membrane biogenesis; LPS core biosynthesis. Its function is as follows. Catalyzes the phosphorylation of D-glycero-D-manno-heptose 7-phosphate at the C-1 position to selectively form D-glycero-beta-D-manno-heptose-1,7-bisphosphate. In terms of biological role, catalyzes the ADP transfer from ATP to D-glycero-beta-D-manno-heptose 1-phosphate, yielding ADP-D-glycero-beta-D-manno-heptose. This is Bifunctional protein HldE from Helicobacter pylori (strain J99 / ATCC 700824) (Campylobacter pylori J99).